Consider the following 164-residue polypeptide: Phosphopantetheine adenylyltransferase (164 aa).

S9 lines the substrate pocket. ATP contacts are provided by residues 9–10 (SF) and H17. Substrate contacts are provided by K41, L73, and K87. Residues 88–90 (GLR), E98, and 123–129 (YSYLSSS) contribute to the ATP site.

This sequence belongs to the bacterial CoaD family. As to quaternary structure, homohexamer. Requires Mg(2+) as cofactor.

It is found in the cytoplasm. The enzyme catalyses (R)-4'-phosphopantetheine + ATP + H(+) = 3'-dephospho-CoA + diphosphate. Its pathway is cofactor biosynthesis; coenzyme A biosynthesis; CoA from (R)-pantothenate: step 4/5. Its function is as follows. Reversibly transfers an adenylyl group from ATP to 4'-phosphopantetheine, yielding dephospho-CoA (dPCoA) and pyrophosphate. The sequence is that of Phosphopantetheine adenylyltransferase from Clostridium botulinum (strain 657 / Type Ba4).